A 282-amino-acid polypeptide reads, in one-letter code: Putative sugar uptake protein lp_2594 (282 aa).

The next 10 helical transmembrane spans lie at 2 to 21, 31 to 48, 53 to 75, 90 to 112, 119 to 136, 146 to 163, 176 to 194, 209 to 226, 233 to 252, and 262 to 281; these read IFLI…LLVG, MFGM…FWLF, VTIS…IGQL, MPIS…FGEW, ILGL…ALSA, FSCY…WIYS, LFLP…WAIY, TLPG…ILSA, NAYI…GLFF, and IVSV…TTAL.

It belongs to the GRP transporter (TC 2.A.7.5) family.

The protein localises to the cell membrane. This Lactiplantibacillus plantarum (strain ATCC BAA-793 / NCIMB 8826 / WCFS1) (Lactobacillus plantarum) protein is Putative sugar uptake protein lp_2594.